Here is a 271-residue protein sequence, read N- to C-terminus: Tryptophan synthase alpha chain (271 aa).

Active-site proton acceptor residues include glutamate 49 and aspartate 60.

Belongs to the TrpA family. As to quaternary structure, tetramer of two alpha and two beta chains.

It catalyses the reaction (1S,2R)-1-C-(indol-3-yl)glycerol 3-phosphate + L-serine = D-glyceraldehyde 3-phosphate + L-tryptophan + H2O. The protein operates within amino-acid biosynthesis; L-tryptophan biosynthesis; L-tryptophan from chorismate: step 5/5. Its function is as follows. The alpha subunit is responsible for the aldol cleavage of indoleglycerol phosphate to indole and glyceraldehyde 3-phosphate. The chain is Tryptophan synthase alpha chain from Burkholderia thailandensis (strain ATCC 700388 / DSM 13276 / CCUG 48851 / CIP 106301 / E264).